Reading from the N-terminus, the 249-residue chain is Proteasome subunit alpha (249 aa).

It belongs to the peptidase T1A family. In terms of assembly, the 20S proteasome core is composed of 14 alpha and 14 beta subunits that assemble into four stacked heptameric rings, resulting in a barrel-shaped structure. The two inner rings, each composed of seven catalytic beta subunits, are sandwiched by two outer rings, each composed of seven alpha subunits. The catalytic chamber with the active sites is on the inside of the barrel. Has a gated structure, the ends of the cylinder being occluded by the N-termini of the alpha-subunits. Is capped at one or both ends by the proteasome regulatory ATPase, PAN.

The protein localises to the cytoplasm. With respect to regulation, the formation of the proteasomal ATPase PAN-20S proteasome complex, via the docking of the C-termini of PAN into the intersubunit pockets in the alpha-rings, triggers opening of the gate for substrate entry. Interconversion between the open-gate and close-gate conformations leads to a dynamic regulation of the 20S proteasome proteolysis activity. Functionally, component of the proteasome core, a large protease complex with broad specificity involved in protein degradation. The polypeptide is Proteasome subunit alpha (Methanosarcina mazei (strain ATCC BAA-159 / DSM 3647 / Goe1 / Go1 / JCM 11833 / OCM 88) (Methanosarcina frisia)).